A 334-amino-acid chain; its full sequence is N-acetyl-gamma-glutamyl-phosphate reductase (334 aa).

The active site involves C154.

It belongs to the NAGSA dehydrogenase family. Type 1 subfamily.

The protein resides in the cytoplasm. It carries out the reaction N-acetyl-L-glutamate 5-semialdehyde + phosphate + NADP(+) = N-acetyl-L-glutamyl 5-phosphate + NADPH + H(+). It functions in the pathway amino-acid biosynthesis; L-arginine biosynthesis; N(2)-acetyl-L-ornithine from L-glutamate: step 3/4. Functionally, catalyzes the NADPH-dependent reduction of N-acetyl-5-glutamyl phosphate to yield N-acetyl-L-glutamate 5-semialdehyde. The protein is N-acetyl-gamma-glutamyl-phosphate reductase of Yersinia pseudotuberculosis serotype I (strain IP32953).